The sequence spans 337 residues: Ketol-acid reductoisomerase (NADP(+)) (337 aa).

The region spanning 3-183 (VEVFYDDDAD…GGTRAGAIRT (181 aa)) is the KARI N-terminal Rossmann domain. NADP(+) is bound by residues 26–29 (YGSQ), Ser52, Ser54, and 84–87 (DTAQ). His109 is an active-site residue. Residue Gly135 participates in NADP(+) binding. One can recognise a KARI C-terminal knotted domain in the interval 184–329 (TFTEETETDL…SKLRGMMSWV (146 aa)). Mg(2+) contacts are provided by Asp192, Glu196, Glu228, and Glu232. Residue Ser253 participates in substrate binding.

Belongs to the ketol-acid reductoisomerase family. The cofactor is Mg(2+).

It carries out the reaction (2R)-2,3-dihydroxy-3-methylbutanoate + NADP(+) = (2S)-2-acetolactate + NADPH + H(+). The enzyme catalyses (2R,3R)-2,3-dihydroxy-3-methylpentanoate + NADP(+) = (S)-2-ethyl-2-hydroxy-3-oxobutanoate + NADPH + H(+). It participates in amino-acid biosynthesis; L-isoleucine biosynthesis; L-isoleucine from 2-oxobutanoate: step 2/4. Its pathway is amino-acid biosynthesis; L-valine biosynthesis; L-valine from pyruvate: step 2/4. Involved in the biosynthesis of branched-chain amino acids (BCAA). Catalyzes an alkyl-migration followed by a ketol-acid reduction of (S)-2-acetolactate (S2AL) to yield (R)-2,3-dihydroxy-isovalerate. In the isomerase reaction, S2AL is rearranged via a Mg-dependent methyl migration to produce 3-hydroxy-3-methyl-2-ketobutyrate (HMKB). In the reductase reaction, this 2-ketoacid undergoes a metal-dependent reduction by NADPH to yield (R)-2,3-dihydroxy-isovalerate. This Salinispora arenicola (strain CNS-205) protein is Ketol-acid reductoisomerase (NADP(+)).